The sequence spans 329 residues: DNA-directed RNA polymerase subunit alpha (329 aa).

The tract at residues 1–234 is alpha N-terminal domain (alpha-NTD); that stretch reads MQGSVTEFLK…EQLDAFVELR (234 aa). An alpha C-terminal domain (alpha-CTD) region spans residues 248-329; that stretch reads FDPILLRPVD…WPPASLADDL (82 aa).

It belongs to the RNA polymerase alpha chain family. In terms of assembly, homodimer. The RNAP catalytic core consists of 2 alpha, 1 beta, 1 beta' and 1 omega subunit. When a sigma factor is associated with the core the holoenzyme is formed, which can initiate transcription.

The catalysed reaction is RNA(n) + a ribonucleoside 5'-triphosphate = RNA(n+1) + diphosphate. In terms of biological role, DNA-dependent RNA polymerase catalyzes the transcription of DNA into RNA using the four ribonucleoside triphosphates as substrates. This chain is DNA-directed RNA polymerase subunit alpha, found in Shewanella baltica (strain OS155 / ATCC BAA-1091).